Reading from the N-terminus, the 342-residue chain is Manganese-dependent ADP-ribose/CDP-alcohol diphosphatase (342 aa).

The Zn(2+) site is built by Asp-18, Gln-20, Asp-67, Asn-103, His-239, His-276, and His-278.

Belongs to the ADPRibase-Mn family. In terms of assembly, monomer. The cofactor is Mg(2+).

It catalyses the reaction CDP-choline + H2O = phosphocholine + CMP + 2 H(+). The enzyme catalyses ADP-D-ribose + H2O = D-ribose 5-phosphate + AMP + 2 H(+). The catalysed reaction is CDP-glycerol + H2O = sn-glycerol 3-phosphate + CMP + 2 H(+). Its function is as follows. Hydrolyzes ADP-ribose, IDP-ribose, CDP-glycerol, CDP-choline and CDP-ethanolamine, but not other non-reducing ADP-sugars or CDP-glucose. The polypeptide is Manganese-dependent ADP-ribose/CDP-alcohol diphosphatase (adprm) (Xenopus tropicalis (Western clawed frog)).